A 151-amino-acid polypeptide reads, in one-letter code: 6,7-dimethyl-8-ribityllumazine synthase (151 aa).

Residues Phe-18, 49–51 (ALE), and 74–76 (CVI) contribute to the 5-amino-6-(D-ribitylamino)uracil site. 79-80 (ET) serves as a coordination point for (2S)-2-hydroxy-3-oxobutyl phosphate. His-82 functions as the Proton donor in the catalytic mechanism. Asn-107 is a binding site for 5-amino-6-(D-ribitylamino)uracil. Arg-121 provides a ligand contact to (2S)-2-hydroxy-3-oxobutyl phosphate.

This sequence belongs to the DMRL synthase family.

The enzyme catalyses (2S)-2-hydroxy-3-oxobutyl phosphate + 5-amino-6-(D-ribitylamino)uracil = 6,7-dimethyl-8-(1-D-ribityl)lumazine + phosphate + 2 H2O + H(+). It functions in the pathway cofactor biosynthesis; riboflavin biosynthesis; riboflavin from 2-hydroxy-3-oxobutyl phosphate and 5-amino-6-(D-ribitylamino)uracil: step 1/2. Catalyzes the formation of 6,7-dimethyl-8-ribityllumazine by condensation of 5-amino-6-(D-ribitylamino)uracil with 3,4-dihydroxy-2-butanone 4-phosphate. This is the penultimate step in the biosynthesis of riboflavin. This Bartonella tribocorum (strain CIP 105476 / IBS 506) protein is 6,7-dimethyl-8-ribityllumazine synthase.